A 396-amino-acid chain; its full sequence is Probable sugar efflux transporter (396 aa).

Helical transmembrane passes span Val-15–Leu-35, Val-50–Leu-70, Leu-81–Phe-101, Val-103–Ala-123, Ala-136–Leu-156, Phe-170–Leu-190, Pro-209–Tyr-229, Phe-246–Gly-266, Ala-275–Ala-295, Ile-299–Met-319, Val-333–Gly-353, and Met-364–Phe-384.

This sequence belongs to the major facilitator superfamily. SotB (TC 2.A.1.2) family.

It is found in the cell inner membrane. Functionally, involved in the efflux of sugars. The physiological role may be the reduction of the intracellular concentration of toxic sugars or sugar metabolites. This chain is Probable sugar efflux transporter, found in Escherichia coli O17:K52:H18 (strain UMN026 / ExPEC).